A 766-amino-acid polypeptide reads, in one-letter code: Lanosterol synthase ERG7 (766 aa).

Positions 1–47 (MVANSTGRDASALKSRKRAADSESEPLLKQGQPFPKQPRIGSELDKT) are disordered. The stretch at 148-190 (ATAIYNYISARAHPEDGGWGLHIEGESSVFGTLMNYVALRLVG) is one PFTB 1 repeat. Aspartate 482 serves as the catalytic Proton donor. 2 PFTB repeats span residues 586-626 (IRTA…KHIG) and 635-676 (SRRG…VVQT).

This sequence belongs to the terpene cyclase/mutase family.

It localises to the lipid droplet. Its subcellular location is the endoplasmic reticulum membrane. The enzyme catalyses (S)-2,3-epoxysqualene = lanosterol. It functions in the pathway terpene metabolism; lanosterol biosynthesis; lanosterol from farnesyl diphosphate: step 3/3. The protein operates within steroid metabolism; ergosterol biosynthesis. Functionally, lanosterol synthase; part of the third module of ergosterol biosynthesis pathway that includes the late steps of the pathway. ERG7 catalyzes the cyclization of (S)-2,3 oxidosqualene to lanosterol, a reaction that forms the sterol core. The third module or late pathway involves the ergosterol synthesis itself through consecutive reactions that mainly occur in the endoplasmic reticulum (ER) membrane. Firstly, the squalene synthase ERG9 catalyzes the condensation of 2 farnesyl pyrophosphate moieties to form squalene, which is the precursor of all steroids. Squalene synthase is crucial for balancing the incorporation of farnesyl diphosphate (FPP) into sterol and nonsterol isoprene synthesis. Secondly, squalene is converted into lanosterol by the consecutive action of the squalene epoxidase ERG1 and the lanosterol synthase ERG7. Then, the delta(24)-sterol C-methyltransferase ERG6 methylates lanosterol at C-24 to produce eburicol. Eburicol is the substrate of the sterol 14-alpha demethylase encoded by CYP51A, CYP51B and CYP51C, to yield 4,4,24-trimethyl ergosta-8,14,24(28)-trienol. CYP51B encodes the enzyme primarily responsible for sterol 14-alpha-demethylation, and plays an essential role in ascospore formation. CYP51A encodes an additional sterol 14-alpha-demethylase, induced on ergosterol depletion and responsible for the intrinsic variation in azole sensitivity. The third CYP51 isoform, CYP51C, does not encode a sterol 14-alpha-demethylase, but is required for full virulence on host wheat ears. The C-14 reductase ERG24 then reduces the C14=C15 double bond which leads to 4,4-dimethylfecosterol. A sequence of further demethylations at C-4, involving the C-4 demethylation complex containing the C-4 methylsterol oxidases ERG25, the sterol-4-alpha-carboxylate 3-dehydrogenase ERG26 and the 3-keto-steroid reductase ERG27, leads to the production of fecosterol via 4-methylfecosterol. ERG28 has a role as a scaffold to help anchor ERG25, ERG26 and ERG27 to the endoplasmic reticulum. The C-8 sterol isomerase ERG2 then catalyzes the reaction which results in unsaturation at C-7 in the B ring of sterols and thus converts fecosterol to episterol. The sterol-C5-desaturases ERG3A and ERG3BB then catalyze the introduction of a C-5 double bond in the B ring to produce 5-dehydroepisterol. The C-22 sterol desaturases ERG5A and ERG5B further convert 5-dehydroepisterol into ergosta-5,7,22,24(28)-tetraen-3beta-ol by forming the C-22(23) double bond in the sterol side chain. Finally, ergosta-5,7,22,24(28)-tetraen-3beta-ol is substrate of the C-24(28) sterol reductase ERG4 to produce ergosterol. The polypeptide is Lanosterol synthase ERG7 (Gibberella zeae (strain ATCC MYA-4620 / CBS 123657 / FGSC 9075 / NRRL 31084 / PH-1) (Wheat head blight fungus)).